Reading from the N-terminus, the 394-residue chain is L-lactate dehydrogenase (394 aa).

One can recognise an FMN hydroxy acid dehydrogenase domain in the interval methionine 1–glutamate 380. Tyrosine 24 provides a ligand contact to substrate. The FMN site is built by serine 106 and glutamine 127. Tyrosine 129 is a binding site for substrate. FMN is bound at residue threonine 155. Arginine 164 contacts substrate. An FMN-binding site is contributed by lysine 251. Histidine 275 serves as the catalytic Proton acceptor. Arginine 278 serves as a coordination point for substrate. Aspartate 306–arginine 330 provides a ligand contact to FMN.

The protein belongs to the FMN-dependent alpha-hydroxy acid dehydrogenase family. Requires FMN as cofactor.

It localises to the cell inner membrane. It catalyses the reaction (S)-lactate + A = pyruvate + AH2. Functionally, catalyzes the conversion of L-lactate to pyruvate. Is coupled to the respiratory chain. The polypeptide is L-lactate dehydrogenase (Klebsiella pneumoniae (strain 342)).